A 682-amino-acid polypeptide reads, in one-letter code: DNA-directed RNA polymerase subunit beta' (682 aa).

4 residues coordinate Zn(2+): Cys69, Cys71, Cys87, and Cys90. Positions 489, 491, and 493 each coordinate Mg(2+).

The protein belongs to the RNA polymerase beta' chain family. RpoC1 subfamily. In terms of assembly, in plastids the minimal PEP RNA polymerase catalytic core is composed of four subunits: alpha, beta, beta', and beta''. When a (nuclear-encoded) sigma factor is associated with the core the holoenzyme is formed, which can initiate transcription. Mg(2+) serves as cofactor. It depends on Zn(2+) as a cofactor.

Its subcellular location is the plastid. It is found in the chloroplast. It carries out the reaction RNA(n) + a ribonucleoside 5'-triphosphate = RNA(n+1) + diphosphate. In terms of biological role, DNA-dependent RNA polymerase catalyzes the transcription of DNA into RNA using the four ribonucleoside triphosphates as substrates. This Acorus gramineus (Dwarf sweet flag) protein is DNA-directed RNA polymerase subunit beta'.